The sequence spans 884 residues: Alanine--tRNA ligase (884 aa).

Zn(2+) contacts are provided by His-565, His-569, Cys-675, and His-679.

Belongs to the class-II aminoacyl-tRNA synthetase family. Zn(2+) serves as cofactor.

The protein resides in the cytoplasm. It carries out the reaction tRNA(Ala) + L-alanine + ATP = L-alanyl-tRNA(Ala) + AMP + diphosphate. Its function is as follows. Catalyzes the attachment of alanine to tRNA(Ala) in a two-step reaction: alanine is first activated by ATP to form Ala-AMP and then transferred to the acceptor end of tRNA(Ala). Also edits incorrectly charged Ser-tRNA(Ala) and Gly-tRNA(Ala) via its editing domain. This chain is Alanine--tRNA ligase, found in Maricaulis maris (strain MCS10) (Caulobacter maris).